The chain runs to 340 residues: Ferredoxin--NADP reductase (340 aa).

Positions 33, 41, 46, 86, 120, 286, and 327 each coordinate FAD.

It belongs to the ferredoxin--NADP reductase type 2 family. As to quaternary structure, homodimer. FAD serves as cofactor.

The enzyme catalyses 2 reduced [2Fe-2S]-[ferredoxin] + NADP(+) + H(+) = 2 oxidized [2Fe-2S]-[ferredoxin] + NADPH. The chain is Ferredoxin--NADP reductase from Rickettsia rickettsii (strain Iowa).